Here is a 116-residue protein sequence, read N- to C-terminus: Large ribosomal subunit protein uL18 (116 aa).

The protein belongs to the universal ribosomal protein uL18 family. Part of the 50S ribosomal subunit; part of the 5S rRNA/L5/L18/L25 subcomplex. Contacts the 5S and 23S rRNAs.

Its function is as follows. This is one of the proteins that bind and probably mediate the attachment of the 5S RNA into the large ribosomal subunit, where it forms part of the central protuberance. The chain is Large ribosomal subunit protein uL18 from Pseudomonas fluorescens (strain ATCC BAA-477 / NRRL B-23932 / Pf-5).